The primary structure comprises 621 residues: Rab11 family-interacting protein 4A (621 aa).

2 consecutive EF-hand domains span residues 14 to 49 and 47 to 82; these read AFLK…FGQG and GQGD…IKGC. The Ca(2+) site is built by aspartate 27, aspartate 29, aspartate 31, tyrosine 33, histidine 38, aspartate 60, asparagine 62, arginine 66, and aspartate 71. Disordered stretches follow at residues 132 to 172 and 203 to 243; these read YSDE…KEEG and DYGE…GQTP. Positions 151–161 are enriched in low complexity; that stretch reads AADSGAGSESS. Positions 162 to 172 are enriched in basic and acidic residues; that stretch reads EGGRQDDKEEG. The segment covering 225–243 has biased composition (polar residues); sequence TNGFSDLGSSLPSSAGQTP. The stretch at 348-556 forms a coiled coil; the sequence is DLKSKLKQEN…LNGQILSLSL (209 aa). In terms of domain architecture, FIP-RBD spans 558–620; the sequence is EAKNLFACHT…DHNPSILEIK (63 aa).

Homodimer. Forms a complex with Rab11 (rab11a or rab11b) and arf6. Isoform 1 is predominantly expressed in neural tissues. Isoform B is expressed ubiquitously. In the developing retina, it is expressed in progenitors throughout the retina at early stages and becomes restricted to the ganglion cell layer and ciliary marginal zone as differentiation proceeds.

Its subcellular location is the recycling endosome membrane. The protein localises to the cleavage furrow. It is found in the midbody. It localises to the cytoplasmic vesicle. In terms of biological role, acts as a regulator of endocytic traffic by participating in membrane delivery. Required for the abscission step in cytokinesis, possibly by acting as an 'address tag' delivering recycling endosome membranes to the cleavage furrow during late cytokinesis. May play a role in differentiation during retinal development. The chain is Rab11 family-interacting protein 4A (rab11fip4a) from Danio rerio (Zebrafish).